Reading from the N-terminus, the 644-residue chain is Alkyldihydroxyacetonephosphate synthase, peroxisomal (644 aa).

A peroxisome-targeting transit peptide spans 1 to 44 (MAEAAGEAGASERDPDAVRARRRLRVLSGHLLGRPQEAPSTNEC). A disordered region spans residues 1–70 (MAEAAGEAGA…PAAPESGTIP (70 aa)). Over residues 10 to 19 (ASERDPDAVR) the composition is skewed to basic and acidic residues. Over residues 49-64 (AASAAGASPAASPAAP) the composition is skewed to low complexity. A phosphoserine mark is found at serine 51 and serine 56. Lysine 88 carries the post-translational modification N6-acetyllysine. In terms of domain architecture, FAD-binding PCMH-type spans 188–370 (FERIPDIVVW…TEATIKIRPT (183 aa)). FAD is bound by residues 220-226 (PIGGGTS), 289-295 (DSLEFSI), and 302-305 (TRAS). The residue at position 333 (lysine 333) is an N6-acetyllysine. 354–360 (EGTLGVI) serves as a coordination point for FAD. Position 501 (arginine 501) interacts with substrate. The active-site Proton donor/acceptor is tyrosine 564. 2 important for enzyme activity regions span residues 601 to 603 (HHH) and 640 to 644 (NRNLL).

The protein belongs to the FAD-binding oxidoreductase/transferase type 4 family. As to quaternary structure, homodimer. The cofactor is FAD.

It localises to the peroxisome membrane. Its subcellular location is the peroxisome. The enzyme catalyses a long chain fatty alcohol + a 1-acylglycerone 3-phosphate = a 1-O-alkylglycerone 3-phosphate + a long-chain fatty acid + H(+). The catalysed reaction is hexadecan-1-ol + 1-hexadecanoylglycerone 3-phosphate = 1-O-hexadecylglycerone 3-phosphate + hexadecanoate + H(+). It catalyses the reaction 1-hexadecanoylglycerone 3-phosphate + a long-chain fatty acid = a 1-acylglycerone 3-phosphate + hexadecanoate. The protein operates within glycerolipid metabolism; ether lipid biosynthesis. With respect to regulation, inhibited by divalent cation Mg(2+). Catalyzes the exchange of the acyl chain in acyl-dihydroxyacetonephosphate (acyl-DHAP) for a long chain fatty alcohol, yielding the first ether linked intermediate, i.e. alkyl-dihydroxyacetonephosphate (alkyl-DHAP), in the pathway of ether lipid biosynthesis. In Rattus norvegicus (Rat), this protein is Alkyldihydroxyacetonephosphate synthase, peroxisomal (Agps).